We begin with the raw amino-acid sequence, 482 residues long: MNLLDPFMKMTEEQDKCMSGAPSPTMSEDSAGSPCPSGSGSDTENTRPQENTFPKGDPELKKETEDEKFPVCIREAVSQVLKGYDWTLVPMPVRVNGSSKSKPHVKRPMNAFMVWAQAARRKLADQYPHLHNAELSKTLGKLWRLLNEGEKRPFVEEAERLRIQHKKDHPDYKYQPRRRKSVKNGQSEQEDGAEQTHISPNAIFKALQADSPHSASSMSEVHSPGEHSGQSQGPPTPPTTPKTDVQPGKPDLKREGRPLQESGRQPPHIDFRDVDIGELSSEVISTIETFDVNEFDQYLPPNGHPGVGSTQAPYTGSYGINSTPSATPGAGPAWMSKQQQQQQQQPQPPQHSLSTINSEQSQSQQRTHIKTEQLSPSHYSDQQQQHSPQQLNYSSFNLQHYSSSYPTITRAQYDYTEHQGSNSYYSHASGQNSGLYSNFSYMNPSQRPMYTPIADTTGVPSIPQTHSPQHWEQPVYTQLTRP.

Disordered regions lie at residues 1–66 (MNLL…ETED) and 160–274 (RLRI…FRDV). Residues 30-41 (SAGSPCPSGSGS) are compositionally biased toward low complexity. Residues 42 to 52 (DTENTRPQENT) show a composition bias toward polar residues. Composition is skewed to basic and acidic residues over residues 56–66 (GDPELKKETED) and 160–174 (RLRI…DYKY). Residue K61 forms a Glycyl lysine isopeptide (Lys-Gly) (interchain with G-Cter in SUMO) linkage. Residues 63–103 (ETEDEKFPVCIREAVSQVLKGYDWTLVPMPVRVNGSSKSKP) are dimerization (DIM). Positions 63 to 103 (ETEDEKFPVCIREAVSQVLKGYDWTLVPMPVRVNGSSKSKP) are PQA. A DNA-binding region (HMG box) is located at residues 105–173 (VKRPMNAFMV…QHKKDHPDYK (69 aa)). Over residues 211–220 (SPHSASSMSE) the composition is skewed to polar residues. The tract at residues 224 to 308 (PGEHSGQSQG…LPPNGHPGVG (85 aa)) is transactivation domain (TAM). Short sequence motifs (9aaTAD) lie at residues 276–285 (IGELSSEVIS) and 291–299 (DVNEFDQYL). Residues 295–395 (FDQYLPPNGH…HSPQQLNYSS (101 aa)) are disordered. Polar residues-rich tracts occupy residues 308 to 326 (GSTQ…TPSA) and 351 to 366 (HSLS…SQQR). Residues 366 to 482 (RTHIKTEQLS…QPVYTQLTRP (117 aa)) are transactivation domain (TAC). K370 is covalently cross-linked (Glycyl lysine isopeptide (Lys-Gly) (interchain with G-Cter in SUMO)). Residues 375-390 (SPSHYSDQQQQHSPQQ) are compositionally biased toward low complexity. The short motif at 433–441 (SGLYSNFSY) is the 9aaTAD 3 element. The tract at residues 448 to 482 (PMYTPIADTTGVPSIPQTHSPQHWEQPVYTQLTRP) is disordered. Over residues 458-482 (GVPSIPQTHSPQHWEQPVYTQLTRP) the composition is skewed to polar residues.

Interacts with the sumoylation factors ube2i/ubc9 and sumo1. Sumoylated. Lys-370 is the major site of sumoylation, although sumoylation at Lys-61 also occurs. Sumoylation plays a key role in regulating formation of the neural crest and otic placode. Expressed in both male and female gonads from after metamorphosis through to adult stages. In the testis, expression is restricted to the supporting Sertoli-like cells. Conversely in the ovary, expression is localized to primary oocytes (at protein level). In developing limbs, expressed before chrondrocytes form (stage 52 tadpoles) and throughout the cartilaginous anlagen until stage 56, after which expression ceases in the enlarged cells of the diaphysis. At later stages, expression continues in the chondrocytes of the epiphysis and metaphysis, and weak expression is seen in most of the diaphysis.

It is found in the nucleus. It localises to the cytoplasm. Transcription factor that plays a key role in chondrocytes differentiation and skeletal development. Specifically binds the 5'-ACAAAG-3' DNA motif present in enhancers and super-enhancers and promotes expression of genes important for chondrogenesis, including COL2A1. Plays a central role in successive steps of chondrocyte differentiation. Absolutely required for precartilaginous condensation, the first step in chondrogenesis during which skeletal progenitors differentiate into prechondrocytes. Together with SOX5 and SOX6, required for overt chondrogenesis when condensed prechondrocytes differentiate into early stage chondrocytes, the second step in chondrogenesis. Later, required to direct hypertrophic maturation and block osteoblast differentiation of growth plate chondrocytes: maintains chondrocyte columnar proliferation, delays prehypertrophy and then prevents osteoblastic differentiation of chondrocytes. Also required for chondrocyte hypertrophy, both indirectly, by keeping the lineage fate of chondrocytes, and directly, by remaining present in upper hypertrophic cells. Low lipid levels are the main nutritional determinant for chondrogenic commitment of skeletal progenitor cells: when lipids levels are low, FOXO transcription factors promote expression of SOX9, which induces chondrogenic commitment and suppresses fatty acid oxidation. In addition to cartilage development, also acts as a regulator of proliferation and differentiation in epithelial stem/progenitor cells. Unlikely to play a role in sex determination but may function during testicular and ovarian differentiation. In Xenopus tropicalis (Western clawed frog), this protein is Transcription factor Sox-9.